Here is a 466-residue protein sequence, read N- to C-terminus: MTMLLDGGPQFPGLGVGSFGAPRHHEMPNREPAGMGLNPFGDSTHAAAAAAAAAAFKLSPATAHDLSSGQSSAFTPQGSGYANALGHHHHHHHHHHASQVPTYGGAASAAFNSTRDFLFRQRGSGLSEAASGGGQHGLFAGSASSLHAPAGIPEPPSYLLFPGLHEQGAGHPSPTGHVDNNQVHLGLRGELFGRADPYRPVASPRTDPYAASAQFPNYSPMNMNMGVNVAAHHGPGAFFRYMRQPIKQELSCKWIEEAQLSRPKKSCDRTFSTMHELVTHVTMEHVGGPEQNNHVCYWEECPREGKSFKAKYKLVNHIRVHTGEKPFPCPFPGCGKIFARSENLKIHKRTHTGEKPFKCEFEGCDRRFANSSDRKKHMHVHTSDKPYICKVCDKSYTHPSSLRKHMKVHESQGSDSSPAASSGYESSTPPAIASANSKDTTKTPSAVQTSTSHNPGLPPNFNEWYV.

Positions 65–80 (DLSSGQSSAFTPQGSG) are enriched in polar residues. Residues 65-103 (DLSSGQSSAFTPQGSGYANALGHHHHHHHHHHASQVPTY) form a disordered region. Residues 86–97 (GHHHHHHHHHHA) are compositionally biased toward basic residues. Lys247 is covalently cross-linked (Glycyl lysine isopeptide (Lys-Gly) (interchain with G-Cter in SUMO2)). The segment at 250 to 285 (LSCKWIEEAQLSRPKKSCDRTFSTMHELVTHVTMEH) adopts a C2H2-type 1; atypical zinc-finger fold. The C2H2-type 2; atypical zinc finger occupies 294 to 321 (HVCYWEECPREGKSFKAKYKLVNHIRVH). 2 short sequence motifs (nuclear localization signal) span residues 296-321 (CYWEECPREGKSFKAKYKLVNHIRVH) and 329-351 (CPFPGCGKIFARSENLKIHKRTH). 3 consecutive C2H2-type zinc fingers follow at residues 327-351 (FPCPFPGCGKIFARSENLKIHKRTH), 357-381 (FKCEFEGCDRRFANSSDRKKHMHVH), and 387-409 (YICKVCDKSYTHPSSLRKHMKVH). Residues 403-466 (RKHMKVHESQ…LPPNFNEWYV (64 aa)) are disordered. Low complexity predominate over residues 411 to 427 (SQGSDSSPAASSGYESS). Residues 434 to 454 (SANSKDTTKTPSAVQTSTSHN) are compositionally biased toward polar residues.

The protein belongs to the GLI C2H2-type zinc-finger protein family. Interacts with KPNA1 and KPNA6. Interacts (via C2H2-type domains 3, 4 and 5) with GLI3; the interaction enhances its transcriptional activity. Interacts (via the C2H2-type domains 3, 4 and 5) with MDFIC (via the C2H2-type domains 3, 4 and 5); the interaction reduces its transcriptional activity. In terms of tissue distribution, CNS. A high level expression is seen in the cerebellum.

It is found in the nucleus. The protein localises to the cytoplasm. Acts as a transcriptional activator. Required in the earliest stages in both axial midline development and left-right (LR) asymmetry specification. Binds to the minimal GLI-consensus sequence 5'-GGGTGGTC-3'. The chain is Zinc finger protein ZIC 3 (Zic3) from Mus musculus (Mouse).